Reading from the N-terminus, the 144-residue chain is Large ribosomal subunit protein uL13 (144 aa).

The protein belongs to the universal ribosomal protein uL13 family. Part of the 50S ribosomal subunit.

This protein is one of the early assembly proteins of the 50S ribosomal subunit, although it is not seen to bind rRNA by itself. It is important during the early stages of 50S assembly. The sequence is that of Large ribosomal subunit protein uL13 from Nitrosospira multiformis (strain ATCC 25196 / NCIMB 11849 / C 71).